The following is a 650-amino-acid chain: MENKFLSGSSELFSSLYNNTNTNSNNNNNNNNNNNNNNNINNTTTTTTTTTSNNNLKNNFSNKNNFSFNNSSNSLSSSFGVPSSPPPQKLNNSGYNFNSSSYSSLVPNIKKRSNSLDDNMSVPTLQNFTNNNNNNNNNNNNNNNNNSNNNSSNNNNNNNNNNNFNNSPTSSPTPYVPTTPLINSYPSSPFLINQQPLSSSTPFPFNHQPYHIHPFTTLSLNNSNGINNNNHNNNHNNSNNNNNNNSNSNSNNHNNHNNNNQSIVPQSIHLQSTTPQIQPLSLQPPQQLPTINGPTSTPPSSSNSTTTTTTTTTTPSTNENSNNNNNSYNTNNNNKPEIQLIDSGAILECFIELRDLGSSISKQSKESMVSGDFANGLERIKVTLSTLTNKIETLDLSIQNIIQNEPRSRIFGNSSDESRVPVLTRPRRFRKSKVKSKENNHHNNNNNNINNININNNNCSTPLLQSPQLSSSSPSLNSSHDGDQHLSSPQLSSSTPQHKSNGNGNTNSTNNNKRKIGELKQCTSCGTTSSPEWRKGPAGNQSLCNACGLYFAKLVRREASLTWKPQSVVSVNDLLCAGKDQKQSNTTSQLTTFINSVEHNQQIFQQQQQQQQQQQQQQQQQQQQQQQQQNHHHQQLQQQQQQQQQQQLHH.

The segment covering 16 to 79 (LYNNTNTNSN…NSSNSLSSSF (64 aa)) has biased composition (low complexity). 4 disordered regions span residues 16-96 (LYNN…SGYN), 111-181 (KRSN…TTPL), 221-335 (NNSN…NNNK), and 409-515 (RIFG…NKRK). A compositionally biased stretch (polar residues) spans 116–129 (LDDNMSVPTLQNFT). Low complexity-rich tracts occupy residues 130–180 (NNNN…PTTP) and 221–260 (NNSNGINNNNHNNNHNNSNNNNNNNSNSNSNNHNNHNNNN). Polar residues predominate over residues 261–272 (QSIVPQSIHLQS). Residues 273–334 (TTPQIQPLSL…NNSYNTNNNN (62 aa)) show a composition bias toward low complexity. Residues 425 to 434 (RPRRFRKSKV) are compositionally biased toward basic residues. Residues 442-511 (HNNNNNNINN…GNGNTNSTNN (70 aa)) are compositionally biased toward low complexity. A GATA-type zinc finger spans residues 522 to 547 (CTSCGTTSSPEWRKGPAGNQSLCNAC). The interval 619–650 (QQQQQQQQQQQNHHHQQLQQQQQQQQQQQLHH) is disordered.

Transcription factor that regulates morphogenetic cell movement during development. In Dictyostelium discoideum (Social amoeba), this protein is GATA zinc finger domain-containing protein 11 (gtaK).